The following is a 928-amino-acid chain: MDSHTSTEGVPLSETNNRSHATPSAQYCQMTVEETCSKLQTNPETGLTSSQEAMHRRDIHGSNEFAQEEEDSLIKKFFEQFSENPLLLLLIGAAAVSFFMGNHDDAISITLAILIVTTVGFVQEYRSEKSLEALNKLVPPEAHLIRAGNSQTVLASTLVPGDLVEFSVGDRIPADCRIVKAVHLSIDESNLTGETTPVTKDTNPVTGTPPIGLADRTNTAYMGTLVRDGNGTGIVVGTGSHTAFGAVYDMVSEISTPKTPLQASMDNLGKDLSLVSFGVIGVICLIGMFQGRDWLEMFTIGVSLAVAAIPEGLPIIVTVTLALGVLRMSRQKAIVRKLPSVETLGSVNVICSDKTGTLTRNHMSCTTCWTVDMGDLANAVTLKPGQSHTEADPKAVAALKNSVSLANMLKVGNLCNNSKFNREAGHLVGNATDIALIEVLDYFGLEDTRETRKRVAEVPFSSSRKWMLTSTTTGDSSTPMISVKGAGEVIAPFCEYYCKKDGKTAPFNDDMRKKVTEIASEMSNDGLRIIAFAYKQGKYEEGSEEAPEGLVFAGLMGLYDPPRPDVPRAIRRLTTGGVRVVMITGDSAATALSIGRRIGMPLMPGTQSVVEGSKLATMSDQALDECLQTASIFARTSPEDKMKIVKGFQRRGDVVAMTGDGVNDAPALKLADIGIAMGQGGTDVAKEAADMILTDDDFATILSAIEEGKGIFNNIRNFITFQLSTSMAALSIVAVATIMGLENPLNPMQILWINILMDGPPAQSLGVEPVDPDVMNKPPRPRNEKVMTPDLVKKCVEAAVIILVGTMLVYVTQMQDGVIDKRDTTMTFTCFVFYDMFNALACRSATKSVFEIGFFSNKMFLYACGASIIGQLAVVYVPFLQSVFQTEALSVKDLLSLVLISSSVWILDEAKKYFLKSRSTNNYTNSVV.

Residues 1–25 (MDSHTSTEGVPLSETNNRSHATPSA) form a disordered region. 4 helical membrane passes run 81–101 (FSENPLLLLLIGAAAVSFFMG), 105–125 (DAISITLAILIVTTVGFVQEY), 271–291 (DLSLVSFGVIGVICLIGMFQG), and 306–326 (VAAIPEGLPIIVTVTLALGVL). Asp-353 acts as the 4-aspartylphosphate intermediate in catalysis. 5 helical membrane-spanning segments follow: residues 718-738 (FITFQLSTSMAALSIVAVATI), 750-770 (ILWINILMDGPPAQSLGVEPV), 799-819 (AVIILVGTMLVYVTQMQDGVI), 860-880 (FLYACGASIIGQLAVVYVPFL), and 887-907 (EALSVKDLLSLVLISSSVWIL).

It belongs to the cation transport ATPase (P-type) (TC 3.A.3) family.

The protein resides in the golgi apparatus membrane. It catalyses the reaction Ca(2+)(in) + ATP + H2O = Ca(2+)(out) + ADP + phosphate + H(+). In terms of biological role, this magnesium-dependent enzyme catalyzes the hydrolysis of ATP coupled with the transport of calcium. Has a role in the secretory pathway. The protein is Calcium-transporting ATPase 1 (PMR1) of Yarrowia lipolytica (strain CLIB 122 / E 150) (Yeast).